A 331-amino-acid chain; its full sequence is Glyceraldehyde-3-phosphate dehydrogenase (331 aa).

NAD(+)-binding positions include 12 to 13, aspartate 34, arginine 78, and threonine 120; that span reads RI. An N6-acetyllysine mark is found at lysine 132 and lysine 138. Residues 149–151 and threonine 180 each bind D-glyceraldehyde 3-phosphate; that span reads SCT. The Nucleophile role is filled by cysteine 150. The residue at position 192 (lysine 192) is an N6-acetyllysine. Residues 209 to 210 and arginine 232 each bind D-glyceraldehyde 3-phosphate; that span reads TG. At lysine 249 the chain carries N6-acetyllysine. Asparagine 314 is a binding site for NAD(+).

The protein belongs to the glyceraldehyde-3-phosphate dehydrogenase family. In terms of assembly, homotetramer.

The protein resides in the cytoplasm. The catalysed reaction is D-glyceraldehyde 3-phosphate + phosphate + NAD(+) = (2R)-3-phospho-glyceroyl phosphate + NADH + H(+). The protein operates within carbohydrate degradation; glycolysis; pyruvate from D-glyceraldehyde 3-phosphate: step 1/5. Catalyzes the oxidative phosphorylation of glyceraldehyde 3-phosphate (G3P) to 1,3-bisphosphoglycerate (BPG) using the cofactor NAD. The first reaction step involves the formation of a hemiacetal intermediate between G3P and a cysteine residue, and this hemiacetal intermediate is then oxidized to a thioester, with concomitant reduction of NAD to NADH. The reduced NADH is then exchanged with the second NAD, and the thioester is attacked by a nucleophilic inorganic phosphate to produce BPG. This Escherichia coli O6:H1 (strain CFT073 / ATCC 700928 / UPEC) protein is Glyceraldehyde-3-phosphate dehydrogenase (gapA).